We begin with the raw amino-acid sequence, 125 residues long: Small ribosomal subunit protein bS6 (125 aa).

A disordered region spans residues 99–125; it reads ASPMVKAREERKPLTEVENNDFEDAEE. The segment covering 104-113 has biased composition (basic and acidic residues); the sequence is KAREERKPLT. The segment covering 116–125 has biased composition (acidic residues); it reads ENNDFEDAEE.

It belongs to the bacterial ribosomal protein bS6 family.

Functionally, binds together with bS18 to 16S ribosomal RNA. This chain is Small ribosomal subunit protein bS6, found in Histophilus somni (strain 2336) (Haemophilus somnus).